The following is a 308-amino-acid chain: Porphobilinogen deaminase (308 aa).

Residue C241 is modified to S-(dipyrrolylmethanemethyl)cysteine.

It belongs to the HMBS family. Monomer. Dipyrromethane is required as a cofactor.

It catalyses the reaction 4 porphobilinogen + H2O = hydroxymethylbilane + 4 NH4(+). The protein operates within porphyrin-containing compound metabolism; protoporphyrin-IX biosynthesis; coproporphyrinogen-III from 5-aminolevulinate: step 2/4. Tetrapolymerization of the monopyrrole PBG into the hydroxymethylbilane pre-uroporphyrinogen in several discrete steps. This is Porphobilinogen deaminase from Staphylococcus saprophyticus subsp. saprophyticus (strain ATCC 15305 / DSM 20229 / NCIMB 8711 / NCTC 7292 / S-41).